The following is a 290-amino-acid chain: Acetyl-coenzyme A carboxylase carboxyl transferase subunit beta (290 aa).

In terms of domain architecture, CoA carboxyltransferase N-terminal spans 28–290; that stretch reads IMTKCPKCKK…TGGEYEWLQD (263 aa). 4 residues coordinate Zn(2+): cysteine 32, cysteine 35, cysteine 51, and cysteine 54. The C4-type zinc finger occupies 32–54; it reads CPKCKKIMLTKELDKNLRVCMNC.

It belongs to the AccD/PCCB family. In terms of assembly, acetyl-CoA carboxylase is a heterohexamer composed of biotin carboxyl carrier protein (AccB), biotin carboxylase (AccC) and two subunits each of ACCase subunit alpha (AccA) and ACCase subunit beta (AccD). Requires Zn(2+) as cofactor.

The protein localises to the cytoplasm. The enzyme catalyses N(6)-carboxybiotinyl-L-lysyl-[protein] + acetyl-CoA = N(6)-biotinyl-L-lysyl-[protein] + malonyl-CoA. Its pathway is lipid metabolism; malonyl-CoA biosynthesis; malonyl-CoA from acetyl-CoA: step 1/1. Its function is as follows. Component of the acetyl coenzyme A carboxylase (ACC) complex. Biotin carboxylase (BC) catalyzes the carboxylation of biotin on its carrier protein (BCCP) and then the CO(2) group is transferred by the transcarboxylase to acetyl-CoA to form malonyl-CoA. The polypeptide is Acetyl-coenzyme A carboxylase carboxyl transferase subunit beta (Bacillus velezensis (strain DSM 23117 / BGSC 10A6 / LMG 26770 / FZB42) (Bacillus amyloliquefaciens subsp. plantarum)).